The sequence spans 320 residues: Methionyl-tRNA formyltransferase (320 aa).

Position 111 to 114 (111 to 114) interacts with (6S)-5,6,7,8-tetrahydrofolate; it reads SLLP.

Belongs to the Fmt family.

The catalysed reaction is L-methionyl-tRNA(fMet) + (6R)-10-formyltetrahydrofolate = N-formyl-L-methionyl-tRNA(fMet) + (6S)-5,6,7,8-tetrahydrofolate + H(+). Functionally, attaches a formyl group to the free amino group of methionyl-tRNA(fMet). The formyl group appears to play a dual role in the initiator identity of N-formylmethionyl-tRNA by promoting its recognition by IF2 and preventing the misappropriation of this tRNA by the elongation apparatus. The polypeptide is Methionyl-tRNA formyltransferase (Pediococcus pentosaceus (strain ATCC 25745 / CCUG 21536 / LMG 10740 / 183-1w)).